Reading from the N-terminus, the 303-residue chain is Vesicle-trafficking protein SEC22c (303 aa).

The Cytoplasmic segment spans residues 1 to 183 (MSMILFASIV…EPAPNLRMKP (183 aa)). Residues 8 to 119 (SIVRVRDGLP…YAFLEFDSVI (112 aa)) enclose the Longin domain. The helical transmembrane segment at 184-204 (VTALGVLSLVLNIMCAALNLI) threads the bilayer. Residues 205–223 (RGVHLAEHSLQVAQEEVGN) are Lumenal-facing. Residues 224–244 (ILAFFIPSVACIVQCYLYLFY) form a helical membrane-spanning segment. At 245 to 248 (SPAR) the chain is on the cytoplasmic side. Residues 249–269 (TLKVLLMLASICLGNAYLHGL) traverse the membrane as a helical segment. Arg-270 is a topological domain (lumenal). The helical transmembrane segment at 271-291 (NTWQILFHVGVAFLSSYQILT) threads the bilayer. Over 292 to 303 (RQLQERQSDYGV) the chain is Cytoplasmic.

This sequence belongs to the synaptobrevin family.

It is found in the endoplasmic reticulum membrane. Functionally, may be involved in vesicle transport between the ER and the Golgi complex. The chain is Vesicle-trafficking protein SEC22c (Sec22c) from Mus musculus (Mouse).